A 164-amino-acid polypeptide reads, in one-letter code: Kunitz-type proteinase inhibitor BbCI (164 aa).

It belongs to the protease inhibitor I3 (leguminous Kunitz-type inhibitor) family.

It is found in the secreted. Its function is as follows. Inhibits T.cruzi cruzipain. The sequence is that of Kunitz-type proteinase inhibitor BbCI from Bauhinia bauhinioides (Perlebia bauhinoides).